Here is a 501-residue protein sequence, read N- to C-terminus: Probable malate:quinone oxidoreductase (501 aa).

It belongs to the MQO family. FAD serves as cofactor.

The catalysed reaction is (S)-malate + a quinone = a quinol + oxaloacetate. Its pathway is carbohydrate metabolism; tricarboxylic acid cycle; oxaloacetate from (S)-malate (quinone route): step 1/1. The protein is Probable malate:quinone oxidoreductase of Geobacillus kaustophilus (strain HTA426).